A 160-amino-acid polypeptide reads, in one-letter code: Nucleotide-binding protein VS_1405 (160 aa).

The protein belongs to the YajQ family.

Functionally, nucleotide-binding protein. The chain is Nucleotide-binding protein VS_1405 from Vibrio atlanticus (strain LGP32) (Vibrio splendidus (strain Mel32)).